The primary structure comprises 410 residues: Schlafen-like protein 1 (410 aa).

Disordered regions lie at residues 1–20 and 141–199; these read MSLR…VMSQ and LHHR…SGVR. Residues 8–20 show a composition bias toward polar residues; the sequence is AQTQMWESPVMSQ. Pro residues predominate over residues 154–173; that stretch reads SHSPGPSPGPSPGLRHPPLP. 264 to 271 serves as a coordination point for ATP; sequence GVEDSGLV. A coiled-coil region spans residues 370–401; it reads QKWAMELGKLEEKVKVLTLEKEQLQQQLRQRQ.

This sequence belongs to the Schlafen family. Subgroup I subfamily.

This Mus musculus (Mouse) protein is Schlafen-like protein 1 (Slfnl1).